A 793-amino-acid polypeptide reads, in one-letter code: Copalyl diphosphate synthase CPS1, chloroplastic (793 aa).

Residues 1–59 constitute a chloroplast transit peptide; that stretch reads MASLSSTILSRSPAARRRITPASAKLHRPECFATSAWMGSSSKNLSLSYQLNHKKISVA. Residue Lys238 participates in substrate binding. Positions 370 and 372 each coordinate Mg(2+). Residues 370-373 carry the DXDD motif motif; that stretch reads DIDD. Lys457 is a binding site for substrate.

It belongs to the terpene synthase family. Mg(2+) is required as a cofactor.

The protein resides in the plastid. It localises to the chloroplast. It carries out the reaction (2E,6E,10E)-geranylgeranyl diphosphate = (+)-copalyl diphosphate. The protein operates within secondary metabolite biosynthesis; terpenoid biosynthesis. Functionally, involved in tanshinone biosynthesis in hairy roots. Catalyzes the conversion of geranylgeranyl diphosphate (GGPP) to copalyl diphosphate (CPP). The chain is Copalyl diphosphate synthase CPS1, chloroplastic from Salvia miltiorrhiza (Chinese sage).